The chain runs to 461 residues: Serine/threonine-protein kinase ppk24, mitochondrial (461 aa).

One can recognise a Protein kinase domain in the interval 120–416 (FQHLKSIAKG…LDSILGTAWV (297 aa)). ATP is bound by residues 126-134 (IAKGATSTI) and Lys-153. Asp-256 acts as the Proton acceptor in catalysis.

Belongs to the protein kinase superfamily. Ser/Thr protein kinase family.

It is found in the mitochondrion. The catalysed reaction is L-seryl-[protein] + ATP = O-phospho-L-seryl-[protein] + ADP + H(+). It carries out the reaction L-threonyl-[protein] + ATP = O-phospho-L-threonyl-[protein] + ADP + H(+). Has a role late in meiosis. This is Serine/threonine-protein kinase ppk24, mitochondrial (ppk24) from Schizosaccharomyces pombe (strain 972 / ATCC 24843) (Fission yeast).